A 673-amino-acid chain; its full sequence is ATP-binding cassette sub-family G member 8 (673 aa).

The segment covering 1–11 has biased composition (basic and acidic residues); the sequence is MAGKAAEERGL. Residues 1–25 form a disordered region; it reads MAGKAAEERGLPKGATPQDTSGLQD. The Cytoplasmic portion of the chain corresponds to 1–416; the sequence is MAGKAAEERG…ISNDFRDLPT (416 aa). One can recognise an ABC transporter domain in the interval 47–313; it reads LEVRDLNYQV…FTAIGYPCPR (267 aa). The ABC transmembrane type-2 domain maps to 411-665; the sequence is FRDLPTLLIH…VLYYVSLRFI (255 aa). The helical transmembrane segment at 417–437 threads the bilayer; the sequence is LLIHGAEACLMSMTIGFLYFG. The Extracellular portion of the chain corresponds to 438 to 447; sequence HGSIQLSFMD. Residues 448-468 traverse the membrane as a helical segment; the sequence is TAALLFMIGALIPFNVILDVI. The Cytoplasmic segment spans residues 469–497; the sequence is SKCYSERAMLYYELEDGLYTTGPYFFAKI. A helical transmembrane segment spans residues 498–518; sequence LGELPEHCAYIIIYGMPTYWL. Over 519–527 the chain is Extracellular; that stretch reads ANLRPGLQP. Residues 528–548 traverse the membrane as a helical segment; sequence FLLHFLLVWLVVFCCRIMALA. The Cytoplasmic segment spans residues 549-555; sequence AAALLPT. The helical transmembrane segment at 556 to 576 threads the bilayer; sequence FHMASFFSNALYNSFYLAGGF. The Extracellular portion of the chain corresponds to 577–639; sequence MINLSSLWTV…LSVMELDSYP (63 aa). The N-linked (GlcNAc...) asparagine glycan is linked to N619. A helical membrane pass occupies residues 640–660; the sequence is LYAIYLIVIGLSGGFMVLYYV. The Cytoplasmic segment spans residues 661 to 673; sequence SLRFIKQKPSQDW.

This sequence belongs to the ABC transporter superfamily. ABCG family. Eye pigment precursor importer (TC 3.A.1.204) subfamily. As to quaternary structure, heterodimer with ABCG8. It depends on Mg(2+) as a cofactor. In terms of processing, N-glycosylated. In terms of tissue distribution, predominantly expressed in the liver. Low expression levels in the small intestine and colon. Very low levels in other tissues, including brain, heart and spleen.

The protein localises to the cell membrane. Its subcellular location is the apical cell membrane. It catalyses the reaction cholesterol(in) + ATP + H2O = cholesterol(out) + ADP + phosphate + H(+). The enzyme catalyses sitosterol(in) + ATP + H2O = sitosterol(out) + ADP + phosphate + H(+). Its activity is regulated as follows. The ATPase activity of the heterodimer is stimulated by cholate. Taurocholate, glycocholate, taurochenodeoxycholate, glycochenodeoxycholate and taurodeoxycholate also stimulate ATPase activity, but to a lower degree. Glycodeoxycholate has no significant effect on ATPase activity. ATPase activity is inhibited by vanadate and by berillium fluoride. Functionally, ABCG5 and ABCG8 form an obligate heterodimer that mediates Mg(2+)- and ATP-dependent sterol transport across the cell membrane. Plays an essential role in the selective transport of the dietary cholesterol in and out of the enterocytes and in the selective sterol excretion by the liver into bile. Required for normal sterol homeostasis. The heterodimer with ABCG5 has ATPase activity. This chain is ATP-binding cassette sub-family G member 8, found in Homo sapiens (Human).